The sequence spans 163 residues: GTP-dependent dephospho-CoA kinase (163 aa).

5 residues coordinate GTP: aspartate 38, valine 39, aspartate 57, glutamate 115, and aspartate 138.

This sequence belongs to the GTP-dependent DPCK family.

The enzyme catalyses 3'-dephospho-CoA + GTP = GDP + CoA + H(+). It functions in the pathway cofactor biosynthesis; coenzyme A biosynthesis. In terms of biological role, catalyzes the GTP-dependent phosphorylation of the 3'-hydroxyl group of dephosphocoenzyme A to form coenzyme A (CoA). The protein is GTP-dependent dephospho-CoA kinase of Methanothermobacter thermautotrophicus (strain ATCC 29096 / DSM 1053 / JCM 10044 / NBRC 100330 / Delta H) (Methanobacterium thermoautotrophicum).